A 1513-amino-acid chain; its full sequence is Exo-beta-1,6-galactobiohydrolase (1513 aa).

Residues 1 to 31 form the signal peptide; that stretch reads MRVLSKSLAAMVAAATLVGGGAFAVAGTAYA. One can recognise a Ricin B-type lectin domain in the interval 666-801; sequence VADTTSGDSA…PSANQTWTLR (136 aa). F5/8 type C domains lie at 965–1112 and 1116–1273; these read AIYV…AFVT and GAAK…VFAQ. The interval 1456–1480 is disordered; the sequence is VAPGPEEQKPGNTNKPGATGNGNKN. Over residues 1465-1480 the composition is skewed to polar residues; that stretch reads PGNTNKPGATGNGNKN. A helical membrane pass occupies residues 1489 to 1509; the sequence is VAAIAGAVALLAAAAGALFML.

It belongs to the glycosyl hydrolase 30 family.

The protein localises to the cell membrane. The catalysed reaction is Hydrolysis of (1-&gt;6)-beta-D-galactosidic linkages in arabinogalactan proteins and (1-&gt;3):(1-&gt;6)-beta-galactans to yield (1-&gt;6)-beta-galactobiose as the final product.. Involved in the type II arabinogalactan (AG) side chains degradation. Specifically releases the non-reducing terminal beta-1,6-galactobiose (beta-1,6-Gal2) from both dearabinosylated larch AG and polymeric beta-1,6-galactan chains by an exo-mode of action. Shows lower activity with larch AG, and very weak activity with dearabinosylated gum arabic, gum arabic and potato galactan. Can probably release beta-1,6-Gal2 from the internal side chains of type II AG. In Bifidobacterium longum subsp. longum (strain ATCC 15707 / DSM 20219 / JCM 1217 / NCTC 11818 / E194b), this protein is Exo-beta-1,6-galactobiohydrolase.